A 326-amino-acid polypeptide reads, in one-letter code: MAEVTATVALTRADVVPSRKRVKLPAWLEVAKPRLIPLLLATTLGGMALTEGWPLSSPRLICTLGGGALASAAAGVLNCLWEQDLDGRMNRTSGRALPSGRLSPTTAFIGAIACTLVAAMLLVSGVNCLAAGLSLLGLCSYVLLYTALLKPRTTQNIVVGGVAGAIPPLVGAAAATGHIGLGGWWLFALVMVWTPAHFWALALLLREDYRAVGIPMLPVVKGPVVTARAISRYGWATVLLSGFGILALPTGGLFYGLMLLPYNNRLLQLVHRLAADPDSLTNAKSLFRWSILYLFGICLLLILSRSALAAHLDQQMIAMLMQLSVA.

8 consecutive transmembrane segments (helical) span residues 35 to 55 (LIPL…GWPL), 60 to 80 (LICT…LNCL), 106 to 126 (TAFI…VSGV), 129 to 149 (LAAG…TALL), 157 to 177 (IVVG…AATG), 185 to 205 (WLFA…ALLL), 238 to 258 (VLLS…YGLM), and 289 to 309 (WSIL…SALA).

Belongs to the UbiA prenyltransferase family. Protoheme IX farnesyltransferase subfamily.

The protein localises to the cell inner membrane. It carries out the reaction heme b + (2E,6E)-farnesyl diphosphate + H2O = Fe(II)-heme o + diphosphate. It functions in the pathway porphyrin-containing compound metabolism; heme O biosynthesis; heme O from protoheme: step 1/1. Converts heme B (protoheme IX) to heme O by substitution of the vinyl group on carbon 2 of heme B porphyrin ring with a hydroxyethyl farnesyl side group. This Synechococcus sp. (strain CC9902) protein is Protoheme IX farnesyltransferase.